The primary structure comprises 341 residues: Protein-glutamate methylesterase/protein-glutamine glutaminase 2 (341 aa).

The 116-residue stretch at 11–126 (RVLVADDSEL…DLGEYGRLIR (116 aa)) folds into the Response regulatory domain. Aspartate 62 is modified (4-aspartylphosphate). One can recognise a CheB-type methylesterase domain in the interval 152-341 (PARAARVEVV…IPRALRELTR (190 aa)). Residues serine 166, histidine 193, and aspartate 285 contribute to the active site.

The protein belongs to the CheB family. Phosphorylated by CheA. Phosphorylation of the N-terminal regulatory domain activates the methylesterase activity.

Its subcellular location is the cytoplasm. It catalyses the reaction [protein]-L-glutamate 5-O-methyl ester + H2O = L-glutamyl-[protein] + methanol + H(+). The catalysed reaction is L-glutaminyl-[protein] + H2O = L-glutamyl-[protein] + NH4(+). Functionally, involved in chemotaxis. Part of a chemotaxis signal transduction system that modulates chemotaxis in response to various stimuli. Catalyzes the demethylation of specific methylglutamate residues introduced into the chemoreceptors (methyl-accepting chemotaxis proteins or MCP) by CheR. Also mediates the irreversible deamidation of specific glutamine residues to glutamic acid. The protein is Protein-glutamate methylesterase/protein-glutamine glutaminase 2 of Anaeromyxobacter dehalogenans (strain 2CP-C).